Here is a 98-residue protein sequence, read N- to C-terminus: Small ribosomal subunit protein bS20 (98 aa).

The span at 1–15 shows a compositional bias: basic residues; sequence MAPKKTTKKGGPKKR. Residues 1–21 are disordered; sequence MAPKKTTKKGGPKKRPSAEKR.

This sequence belongs to the bacterial ribosomal protein bS20 family.

In terms of biological role, binds directly to 16S ribosomal RNA. The polypeptide is Small ribosomal subunit protein bS20 (Chlamydia abortus (strain DSM 27085 / S26/3) (Chlamydophila abortus)).